Consider the following 1009-residue polypeptide: DNA polymerase catalytic subunit (1009 aa).

Belongs to the DNA polymerase type-B family.

Its subcellular location is the host nucleus. The enzyme catalyses DNA(n) + a 2'-deoxyribonucleoside 5'-triphosphate = DNA(n+1) + diphosphate. The sequence is that of DNA polymerase catalytic subunit (9) from Saimiri sciureus (Common squirrel monkey).